Reading from the N-terminus, the 365-residue chain is Neuronal migration protein doublecortin (365 aa).

Ser-28 is modified (phosphoserine; by CDK5). The residue at position 47 (Ser-47) is a Phosphoserine; by MARK1 and PKA. Doublecortin domains are found at residues 53 to 139 (KKVR…VEYT) and 180 to 263 (KLVT…AQDD). Tyr-70 carries the phosphotyrosine; by ABL modification. Ser-74 carries the phosphoserine; by PKC modification. At Ser-90 the chain carries Phosphoserine; by CK2. A Phosphoserine; by PKC modification is found at Ser-110. Position 115 is a phosphoserine; by CK2, MARK1 and PKA (Ser-115). At Ser-265 the chain carries Phosphoserine; by CK2. The segment at 275-365 (KGNPSATAGP…DDSDSLGDSM (91 aa)) is disordered. Ser-287 is modified (phosphoserine; by CDK5). At Thr-289 the chain carries Phosphothreonine; by CDK5. Phosphoserine; by PKC is present on Ser-294. Phosphoserine; by CDK5 is present on Ser-297. Ser-306 is modified (phosphoserine; by CK2). The residue at position 306 (Ser-306) is a Phosphoserine; by DYRK2. A compositionally biased stretch (polar residues) spans 307–341 (PADSGNDQDANGTSSSQLSTPKSKQSPISTPTSPG). A Phosphothreonine; by CDK5 modification is found at Thr-326. Thr-326 is subject to Phosphothreonine; by PKC and MAPK. Ser-332 carries the post-translational modification Phosphoserine; by CDK5. Phosphoserine; by MAPK is present on Ser-332. Thr-336 is subject to Phosphothreonine; by MAPK. Phosphoserine; by CDK5 is present on Ser-339. At Ser-339 the chain carries Phosphoserine; by MAPK. The residue at position 342 (Ser-342) is a Phosphoserine; by PKC. 2 positions are modified to phosphoserine; by CK2: Ser-354 and Ser-360. Over residues 356–365 (DDSDSLGDSM) the composition is skewed to acidic residues.

In terms of assembly, interacts with tubulin. Interacts with USP9X. Post-translationally, phosphorylation by MARK1, MARK2 and PKA regulates its ability to bind microtubules. Phosphorylation at Ser-265 and Ser-297 seems to occur only in neonatal brain, the levels falling precipitously by postnatal day 21. In terms of processing, ubiquitinated by MDM2, leading to its degradation by the proteasome. Ubiquitinated by MDM2 and subsequent degradation leads to reduce the dendritic spine density of olfactory bulb granule cells.

The protein localises to the cytoplasm. It is found in the cell projection. It localises to the neuron projection. Its function is as follows. Microtubule-associated protein required for initial steps of neuronal dispersion and cortex lamination during cerebral cortex development. May act by competing with the putative neuronal protein kinase DCLK1 in binding to a target protein. May in that way participate in a signaling pathway that is crucial for neuronal interaction before and during migration, possibly as part of a calcium ion-dependent signal transduction pathway. May participate along with PAFAH1B1/LIS-1 in a distinct overlapping signaling pathway that promotes neuronal migration. This Rattus norvegicus (Rat) protein is Neuronal migration protein doublecortin (Dcx).